The primary structure comprises 600 residues: DNA repair and recombination protein mus-11 (600 aa).

The DNA-binding element occupies 148–152; sequence KRALR. Over residues 268 to 319 the composition is skewed to polar residues; sequence LNPQAQQSRPLSRSGSTGSLNTRQQPQNSHQFTARAQSRPPQQQLNSNQSRP. Disordered regions lie at residues 268–357 and 387–600; these read LNPQ…AGAA and APKP…QRLA. 2 stretches are compositionally biased toward low complexity: residues 325–343 and 458–470; these read NNSSNANTPNNPQNYTTPQ and ARSASGSFSRAGP. Positions 502–512 are enriched in polar residues; it reads GFSSSPSTNRG. Low complexity-rich tracts occupy residues 540–564 and 577–591; these read SATTTTIAANTTAGSATGGNAAPSA and ANASNATAAGAATSG.

This sequence belongs to the RAD52 family. In terms of assembly, part of a complex that includes mei-3/rad51 and mus-11/rad52.

It is found in the nucleus. Involved in DNA double-strand break (DSB) repair and recombination. Promotes the annealing of complementary single-stranded DNA and by stimulation of the mei-3/rad51 recombinase. The polypeptide is DNA repair and recombination protein mus-11 (mus-11) (Neurospora crassa (strain ATCC 24698 / 74-OR23-1A / CBS 708.71 / DSM 1257 / FGSC 987)).